The chain runs to 558 residues: Ceramide kinase-like protein (558 aa).

Positions 1 to 36 (MPWRRRRNRVSALEGGREEEAPPEAAAVPPALLTSP) are disordered. 2 consecutive short sequence motifs (nuclear localization signal) follow at residues 2-9 (PWRRRRNR) and 102-106 (KLKRR). The DAGKc domain maps to 164 to 339 (NRPKSLKILL…VDVCTFSTAG (176 aa)).

Phosphorylated on serine residues. Isoform 1 and isoform 2 are expressed in adult retina, liver and pancreas as well as in fetal brain, lung and kidney. Isoform 3 is expressed in adult retina as well as in fetal lung and liver. Isoform 4 is expressed in adult retina, lung and kidney as well as in fetal lung and liver. Moderately expressed in retina, kidney, lung, testis, trachea, and pancreas. Weakly expressed in brain, placenta and liver.

The protein localises to the cytoplasm. The protein resides in the nucleus. It localises to the nucleolus. Its subcellular location is the golgi apparatus. It is found in the trans-Golgi network. The protein localises to the endoplasmic reticulum. Functionally, has no detectable ceramide-kinase activity. Overexpression of CERKL protects cells from apoptosis in oxidative stress conditions. This chain is Ceramide kinase-like protein (CERKL), found in Homo sapiens (Human).